A 396-amino-acid chain; its full sequence is uncharacterized protein (396 aa).

12 helical membrane passes run 12-32 (LLALAVSAFAIGTTEFISVGL), 48-68 (GLTVSLYALGVTFGAPILTSL), 78-98 (LLWIMFIFIAGNTMAATASSI), 106-126 (VISAFSHGVFMSIGSTIAADI), 138-158 (IMFTGLTVATVTGVPFGTFIG), 165-185 (FAFMVIIAVGIIAFITNGILV), 209-229 (LLLLFVITALGYGGTFVVFTY), 242-262 (AGTVAVILLGYGIAIAIGNMI), 271-291 (PIAALFYMFIVQAIVLFVLTF), 297-317 (AAGLITILCMGLLAFMNVPGL), 338-358 (AMNIAAFNAGIALGSYLGGVI), and 362-382 (IGLIHTAWIGGLMVVGAVILT).

This sequence belongs to the major facilitator superfamily.

It is found in the cell membrane. This is an uncharacterized protein from Bacillus subtilis (strain 168).